The sequence spans 106 residues: Large ribosomal subunit protein bL21 (106 aa).

It belongs to the bacterial ribosomal protein bL21 family. In terms of assembly, part of the 50S ribosomal subunit. Contacts protein L20.

Its function is as follows. This protein binds to 23S rRNA in the presence of protein L20. The polypeptide is Large ribosomal subunit protein bL21 (Xanthomonas oryzae pv. oryzae (strain MAFF 311018)).